The following is a 553-amino-acid chain: Glycerol-3-phosphate dehydrogenase (553 aa).

13–41 is an FAD binding site; it reads DLIVIGGGINGVGTARDGALRGLKTLLIE.

It belongs to the FAD-dependent glycerol-3-phosphate dehydrogenase family. It depends on FAD as a cofactor.

It localises to the cytoplasm. The catalysed reaction is a quinone + sn-glycerol 3-phosphate = dihydroxyacetone phosphate + a quinol. The sequence is that of Glycerol-3-phosphate dehydrogenase (glpD) from Synechocystis sp. (strain ATCC 27184 / PCC 6803 / Kazusa).